An 88-amino-acid polypeptide reads, in one-letter code: DNA-directed RNA polymerase subunit omega (88 aa).

This sequence belongs to the RNA polymerase subunit omega family. The RNAP catalytic core consists of 2 alpha, 1 beta, 1 beta' and 1 omega subunit. When a sigma factor is associated with the core the holoenzyme is formed, which can initiate transcription.

The catalysed reaction is RNA(n) + a ribonucleoside 5'-triphosphate = RNA(n+1) + diphosphate. Its function is as follows. Promotes RNA polymerase assembly. Latches the N- and C-terminal regions of the beta' subunit thereby facilitating its interaction with the beta and alpha subunits. The polypeptide is DNA-directed RNA polymerase subunit omega (Salinispora arenicola (strain CNS-205)).